The primary structure comprises 512 residues: Monocarboxylate transporter 14 (512 aa).

Over 1–29 (MYTSHEDIGYDLEDDRKAKNKKTLKPHPD) the chain is Cytoplasmic. The next 12 helical transmembrane spans lie at 30–50 (IDGG…ILIM), 76–96 (WVSS…GLFI), 105–125 (AIIG…AANV), 129–149 (FITF…PAVV), 161–181 (LAQG…TVLL), 193–211 (AMFI…GALM), 317–337 (MFVA…IPFI), 355–375 (FPLT…LGAV), 381–401 (ISVW…IFLL), 410–430 (LAVI…MPVV), 446–466 (IIIC…GWIF), and 476–496 (FYIC…QPCI). Residues 497-512 (QMIDQSRRKCIEGAHV) are Cytoplasmic-facing.

This sequence belongs to the major facilitator superfamily. Monocarboxylate porter (TC 2.A.1.13) family.

The protein localises to the cell membrane. In terms of biological role, proton-linked monocarboxylate transporter. May catalyze the transport of monocarboxylates across the plasma membrane. The sequence is that of Monocarboxylate transporter 14 (Slc16a14) from Mus musculus (Mouse).